Here is a 577-residue protein sequence, read N- to C-terminus: Polyadenylate-binding protein, cytoplasmic and nuclear (577 aa).

Over residues 1-10 (MADITDKTAE) the composition is skewed to basic and acidic residues. A disordered region spans residues 1 to 36 (MADITDKTAEQLENLNIQDDQKQAATGSESQSVENS). Alanine 2 is modified (N-acetylalanine). Lysine 7 participates in a covalent cross-link: Glycyl lysine isopeptide (Lys-Gly) (interchain with G-Cter in ubiquitin). Residues 9-61 (AEQLENLNIQDDQKQAATGSESQSVENSSASLYVGDLEPSVSEAHLYDIFSPI) form a required and sufficient for nuclear export region. Over residues 11–27 (QLENLNIQDDQKQAATG) the composition is skewed to polar residues. Positions 12-17 (LENLNI) match the Nuclear export signal motif. 4 consecutive RRM domains span residues 38–116 (ASLY…WSQR), 126–203 (GNIF…PHLS), 219–296 (TNLY…RAQK), and 322–399 (VNLF…IAQR). Residue arginine 107 is modified to Omega-N-methylarginine. Serine 249 carries the phosphoserine modification. The required and sufficient for nuclear import stretch occupies residues 281–317 (DSELNGEKLYVGRAQKKNERMHVLKKQYEAYRLEKMA). Serine 332 bears the Phosphoserine mark. Lysine 337 is covalently cross-linked (Glycyl lysine isopeptide (Lys-Gly) (interchain with G-Cter in ubiquitin)). Serine 405 is subject to Phosphoserine. The tract at residues 473–577 (PPQFRNGPVY…KEQEQQTEQA (105 aa)) is interaction with SUP35. Residues 489-568 (GFPRNANDNN…ASAAYESFKK (80 aa)) enclose the PABC domain.

It belongs to the polyadenylate-binding protein type-1 family. As to quaternary structure, binds to poly(A) mRNA to form a periodic structure with a packing density of one molecule per 25 adenylate residues. Interacts with the nuclear export factor CRM1 and with the importin SXM1. Interacts with RNA15, a component of the cleavage factor IA (CFIA) complex. Interacts with translation initiation factor eIF4G (TIF4631 or TIF4632) and release factor eRF3 (SUP35). Interacts with the PAB-dependent poly(A)-nuclease (PAN) complex regulatory subunit PAN3. Interacts with ARF1, DCP1, PBP1, the Hsp70 chaperone SSA1, and TPA1. Interacts with PAT1 in an RNA-dependent manner.

The protein localises to the cytoplasm. It is found in the nucleus. Functionally, binds the poly(A) tail of mRNA. Appears to be an important mediator of the multiple roles of the poly(A) tail in mRNA biogenesis, stability and translation. In the nucleus, interacts with the nuclear cleavage factor IA (CFIA), which is required for both mRNA cleavage and polyadenylation. Is also required for efficient mRNA export to the cytoplasm. Acts in concert with a poly(A)-specific nuclease (PAN) to affect poly(A) tail shortening, which may occur concomitantly with either nucleocytoplasmic mRNA transport or translational initiation. Regulates PAN activity via interaction with the stimulator PAN3 or the inhibitor PBP1. In the cytoplasm, affects both translation and mRNA decay. Stimulates translation by interaction with translation initiation factor eIF4G, a subunit of the cap-binding complex eIF4F, bringing the 5'- and 3'-ends of the mRNA in proximity. The formation of this circular mRNP structure appears to be critical for the synergistic effects of the cap and the poly(A) tail in facilitating translation initiation, recycling of ribosomes, and mRNA stability. Also regulates translation termination by recruiting eukaryotic release factor 3 (eRF3). Interaction with eRF3 is also required for regulation of normal mRNA decay through translation termination-coupled poly(A) shortening, probably mediated by PAN. Loss of PAB1 from the mRNP after deadenylation triggers mRNA degradation. Inhibits the major cytoplasmic mRNA deadenylase CCR4-NOT complex. Is also associated peripherally with COPI vesicles through its interaction with ARF1, and this is required for correct localization of the asymmetrically distributed ASH1 mRNA. This chain is Polyadenylate-binding protein, cytoplasmic and nuclear (PAB1), found in Saccharomyces cerevisiae (strain ATCC 204508 / S288c) (Baker's yeast).